Consider the following 731-residue polypeptide: Ubiquitin carboxyl-terminal hydrolase 17 (731 aa).

Residues C57, C60, C68, C71, C77, C81, H90, and C94 each coordinate Zn(2+). The MYND-type zinc-finger motif lies at 57–94; sequence CAVCLYPTTTRCSQCKSVRYCSSKCQILHWRRGHKEEC. 2 disordered regions span residues 171 to 219 and 262 to 281; these read YETR…DSAN and LPSKANSKPKVSQASSSGLK. 2 stretches are compositionally biased toward polar residues: residues 207–219 and 265–281; these read GNQNSRRSGDSAN and KANSKPKVSQASSSGLK. A USP domain is found at 329–633; it reads FGLVNLGNSC…GAYMLLYARD (305 aa). C338 acts as the Nucleophile in catalysis. Catalysis depends on H592, which acts as the Proton acceptor. The segment at 637–702 is disordered; the sequence is PVSKNGGRKS…TSSCSTKDSS (66 aa). The span at 677-701 shows a compositional bias: low complexity; that stretch reads DWSSGSLSSMFSSSDTTSSCSTKDS.

The protein belongs to the peptidase C19 family.

It catalyses the reaction Thiol-dependent hydrolysis of ester, thioester, amide, peptide and isopeptide bonds formed by the C-terminal Gly of ubiquitin (a 76-residue protein attached to proteins as an intracellular targeting signal).. Recognizes and hydrolyzes the peptide bond at the C-terminal Gly of ubiquitin. Involved in the processing of poly-ubiquitin precursors as well as that of ubiquitinated proteins. The polypeptide is Ubiquitin carboxyl-terminal hydrolase 17 (UBP17) (Arabidopsis thaliana (Mouse-ear cress)).